Reading from the N-terminus, the 957-residue chain is MQPLVMQGCPYTLPRCHEWHAADRFHHSSSLRNTCPQPQVRAAVTIPAPPWDGAGDPCLSPKLLNGSVGAVGPLEPSAMNLCWNEIKKKSHNLRARLEAFSDHSGKLQLPLQEIIDWLSQKDEELSAQLPLQGDVALVQQEKETHAAFMEEVKSKGPYIYSVLESAQAFLSQHPFEELEESHSESKDTSPRQRIQNLSRFVWKQATVASELWEKLTARCVDQHRHIEHTLEHLLEIQGAMEELSSTLTQAEGVRATWEPIGDLFIDSLPEHIQAIKLFKEEFSPVKDGVKLVNDLAHQLAISDVHLSMENSRALEQINVRWKQLQVSVAERLKQLQDAHRDFGPGSQHFLSTSVQVPWERAISPNKVPYYINHQAQTTCWDHPKMTELYQTLADLNNIKFSAYRTAMKLRRVQKALRLDLVTLTTALEIFNEHDLQASEHVMDVVEVIHCLTALYERLEEERGILVNVPLCVDMSLNWLLNVFDSGRSGKMRALSFKTGIACLCGTEVKEKLQYLFSQVANSGSQCDQRHLGALLHEAIQVPRQLGEVAAFGGSNVEPSVRSCFRFSTGKPVIEASQFLEWVNLEPQSMVWLAVLHRVTVAEQVKHQTKCSICRQCPIKGFRYRSLKQFNVDICQTCFLTGKASKGNKLHYPIMEYYTPTTSSENMRDFATTLKNKFRSKQYFSKHPQRGYLPVQSVLESDCSETPASSPMLPHADTHSRIEHFASRLAEMESQNCSFFNDSLSPDDSIDEDQYLLRHSSPITDREPAFGQQAPCSMATESKGELEKILAHLEDENRILQGELRRLKWQHEEAVEAPTLAEGSAEATPDHRNEELLAEARILRQHKSRLETRMQILEDHNKQLESQLQRLRELLLQPPTESDGNGSAGSSLASSPRQSEGSHPREKGQTTPDTEAADDVGSKSQDVSLCLEDIMEKLRHAFPSVRSSDVTANTLLAS.

Spectrin repeat units lie at residues 102–179 (DHSG…EELE) and 231–337 (EHLL…QLQD). A WW domain is found at 358-383 (WERAISPNKVPYYINHQAQTTCWDHP). The ZZ-type; degenerate zinc-finger motif lies at 605-661 (KHQTKCSICRQCPIKGFRYRSLKQFNVDICQTCFLTGKASKGNKLHYPIMEYYTPTT). C610, C613, C634, and C637 together coordinate Zn(2+). At S748 the chain carries Phosphoserine. A compositionally biased stretch (low complexity) spans 877–894 (PPTESDGNGSAGSSLASS). The disordered stretch occupies residues 877–923 (PPTESDGNGSAGSSLASSPRQSEGSHPREKGQTTPDTEAADDVGSKS). At T910 the chain carries Phosphothreonine.

As to quaternary structure, interacts with PRX; this enhances phosphorylation. Identified in a dystroglycan complex that contains at least PRX, DRP2, UTRN, DMD and DAG1. Detected in trigeminal nerve Schwann cells. Detected in brain cortex and hippocampus. Detected in brain membrane fractions and highly enriched in the postsynaptic density (at protein level).

The protein resides in the postsynaptic density. The protein localises to the cell projection. It is found in the dendrite. It localises to the perikaryon. Its subcellular location is the cell membrane. In terms of biological role, required for normal myelination and for normal organization of the cytoplasm and the formation of Cajal bands in myelinating Schwann cells. Required for normal PRX location at appositions between the abaxonal surface of the myelin sheath and the Schwann cell plasma membrane. Possibly involved in membrane-cytoskeleton interactions of the central nervous system. The chain is Dystrophin-related protein 2 (Drp2) from Rattus norvegicus (Rat).